The chain runs to 126 residues: Glycine cleavage system H protein (126 aa).

Residues 24-105 enclose the Lipoyl-binding domain; it reads TLTVGITDHA…AYGVWLFKIK (82 aa). Residue Lys65 is modified to N6-lipoyllysine.

It belongs to the GcvH family. The glycine cleavage system is composed of four proteins: P, T, L and H. (R)-lipoate is required as a cofactor.

In terms of biological role, the glycine cleavage system catalyzes the degradation of glycine. The H protein shuttles the methylamine group of glycine from the P protein to the T protein. The polypeptide is Glycine cleavage system H protein (Burkholderia cenocepacia (strain HI2424)).